Here is a 226-residue protein sequence, read N- to C-terminus: Leucyl/phenylalanyl-tRNA--protein transferase (226 aa).

This sequence belongs to the L/F-transferase family.

The protein resides in the cytoplasm. It catalyses the reaction N-terminal L-lysyl-[protein] + L-leucyl-tRNA(Leu) = N-terminal L-leucyl-L-lysyl-[protein] + tRNA(Leu) + H(+). The catalysed reaction is N-terminal L-arginyl-[protein] + L-leucyl-tRNA(Leu) = N-terminal L-leucyl-L-arginyl-[protein] + tRNA(Leu) + H(+). The enzyme catalyses L-phenylalanyl-tRNA(Phe) + an N-terminal L-alpha-aminoacyl-[protein] = an N-terminal L-phenylalanyl-L-alpha-aminoacyl-[protein] + tRNA(Phe). In terms of biological role, functions in the N-end rule pathway of protein degradation where it conjugates Leu, Phe and, less efficiently, Met from aminoacyl-tRNAs to the N-termini of proteins containing an N-terminal arginine or lysine. The sequence is that of Leucyl/phenylalanyl-tRNA--protein transferase from Pseudomonas aeruginosa (strain ATCC 15692 / DSM 22644 / CIP 104116 / JCM 14847 / LMG 12228 / 1C / PRS 101 / PAO1).